We begin with the raw amino-acid sequence, 254 residues long: Small ribosomal subunit protein mS40 (254 aa).

The transit peptide at 1–33 (MAAPLRHTLLKLVPTLLRSSYVAQVPLQTLCTR) directs the protein to the mitochondrion. Ser-47 bears the Phosphoserine mark. The interval 218–254 (YQGNLLEESGPPPESMPEMPTTPPAESSIEQPGSQSA) is disordered. Positions 227-240 (GPPPESMPEMPTTP) are enriched in pro residues.

This sequence belongs to the bacterial ribosomal protein bS18 family. Mitochondrion-specific ribosomal protein mS40 subfamily. As to quaternary structure, component of the mitochondrial ribosome small subunit (28S) which comprises a 12S rRNA and about 30 distinct proteins.

It is found in the mitochondrion. This Mus musculus (Mouse) protein is Small ribosomal subunit protein mS40 (Mrps18b).